We begin with the raw amino-acid sequence, 139 residues long: Histone H2B (139 aa).

Positions 1 to 37 (MAPKSVASKAPASQASKAPAAASKAPAKAAKTSAAPK) are enriched in low complexity. The interval 1 to 48 (MAPKSVASKAPASQASKAPAAASKAPAKAAKTSAAPKDGAKKRSKKRV) is disordered. Lysine 9 carries the N6-acetyllysine; alternate modification. Lysine 9 is covalently cross-linked (Glycyl lysine isopeptide (Lys-Gly) (interchain with G-Cter in SUMO); alternate). Serine 13 is modified (phosphoserine). Lysine 17 bears the N6-acetyllysine mark. A Glycyl lysine isopeptide (Lys-Gly) (interchain with G-Cter in ubiquitin) cross-link involves residue lysine 134.

Belongs to the histone H2B family. As to quaternary structure, the nucleosome is a histone octamer containing two molecules each of H2A, H2B, H3 and H4 assembled in one H3-H4 heterotetramer and two H2A-H2B heterodimers. The octamer wraps approximately 147 bp of DNA. In terms of processing, monoubiquitinated by the UBC2-BRE1 complex to form H2BK123ub1. H2BK123ub1 gives a specific tag for epigenetic transcriptional activation and is also prerequisite for H3K4me and H3K79me formation. H2BK123ub1 also modulates the formation of double-strand breaks during meiosis and is a prerequisite for DNA-damage checkpoint activation. Post-translationally, phosphorylated to form H2BS10ph during progression through meiotic prophase. May be correlated with chromosome condensation. Acetylation of N-terminal lysines and particularly formation of H2BK11ac has a positive effect on transcription. In terms of processing, sumoylation to form H2BK6su occurs preferentially near the telomeres and represses gene transcription.

It is found in the nucleus. The protein localises to the chromosome. Its function is as follows. Core component of nucleosome. Nucleosomes wrap and compact DNA into chromatin, limiting DNA accessibility to the cellular machineries which require DNA as a template. Histones thereby play a central role in transcription regulation, DNA repair, DNA replication and chromosomal stability. DNA accessibility is regulated via a complex set of post-translational modifications of histones, also called histone code, and nucleosome remodeling. The sequence is that of Histone H2B (HTB1) from Cryptococcus neoformans var. neoformans serotype D (strain B-3501A) (Filobasidiella neoformans).